Reading from the N-terminus, the 336-residue chain is Holliday junction branch migration complex subunit RuvB (336 aa).

The tract at residues 2–186 (QDQEEERMIT…FGVICKLELY (185 aa)) is large ATPase domain (RuvB-L). ATP contacts are provided by residues L25, R26, G67, K70, T71, T72, 133–135 (EDF), R176, Y186, and R223. Mg(2+) is bound at residue T71. Residues 187-257 (NNKQLTAIVK…VAEEALILLE (71 aa)) are small ATPAse domain (RuvB-S). Positions 260-336 (SLGLDNTDKK…YEHFNIPSAE (77 aa)) are head domain (RuvB-H). The DNA site is built by R296, R315, and R320.

Belongs to the RuvB family. As to quaternary structure, homohexamer. Forms an RuvA(8)-RuvB(12)-Holliday junction (HJ) complex. HJ DNA is sandwiched between 2 RuvA tetramers; dsDNA enters through RuvA and exits via RuvB. An RuvB hexamer assembles on each DNA strand where it exits the tetramer. Each RuvB hexamer is contacted by two RuvA subunits (via domain III) on 2 adjacent RuvB subunits; this complex drives branch migration. In the full resolvosome a probable DNA-RuvA(4)-RuvB(12)-RuvC(2) complex forms which resolves the HJ.

The protein localises to the cytoplasm. It carries out the reaction ATP + H2O = ADP + phosphate + H(+). In terms of biological role, the RuvA-RuvB-RuvC complex processes Holliday junction (HJ) DNA during genetic recombination and DNA repair, while the RuvA-RuvB complex plays an important role in the rescue of blocked DNA replication forks via replication fork reversal (RFR). RuvA specifically binds to HJ cruciform DNA, conferring on it an open structure. The RuvB hexamer acts as an ATP-dependent pump, pulling dsDNA into and through the RuvAB complex. RuvB forms 2 homohexamers on either side of HJ DNA bound by 1 or 2 RuvA tetramers; 4 subunits per hexamer contact DNA at a time. Coordinated motions by a converter formed by DNA-disengaged RuvB subunits stimulates ATP hydrolysis and nucleotide exchange. Immobilization of the converter enables RuvB to convert the ATP-contained energy into a lever motion, pulling 2 nucleotides of DNA out of the RuvA tetramer per ATP hydrolyzed, thus driving DNA branch migration. The RuvB motors rotate together with the DNA substrate, which together with the progressing nucleotide cycle form the mechanistic basis for DNA recombination by continuous HJ branch migration. Branch migration allows RuvC to scan DNA until it finds its consensus sequence, where it cleaves and resolves cruciform DNA. The polypeptide is Holliday junction branch migration complex subunit RuvB (Alkaliphilus metalliredigens (strain QYMF)).